The sequence spans 344 residues: Protein RecA (344 aa).

65–72 (GPESSGKT) is a binding site for ATP.

It belongs to the RecA family.

The protein localises to the cytoplasm. Functionally, can catalyze the hydrolysis of ATP in the presence of single-stranded DNA, the ATP-dependent uptake of single-stranded DNA by duplex DNA, and the ATP-dependent hybridization of homologous single-stranded DNAs. It interacts with LexA causing its activation and leading to its autocatalytic cleavage. This Campylobacter lari protein is Protein RecA.